The sequence spans 826 residues: Leucine--tRNA ligase (826 aa).

The short motif at 41-51 (PYPSGKLHMGH) is the 'HIGH' region element. A 'KMSKS' region motif is present at residues 586–590 (KMSKS). Lys589 provides a ligand contact to ATP.

The protein belongs to the class-I aminoacyl-tRNA synthetase family.

It localises to the cytoplasm. The catalysed reaction is tRNA(Leu) + L-leucine + ATP = L-leucyl-tRNA(Leu) + AMP + diphosphate. The protein is Leucine--tRNA ligase of Natranaerobius thermophilus (strain ATCC BAA-1301 / DSM 18059 / JW/NM-WN-LF).